The chain runs to 225 residues: Prohead protease (225 aa).

Active-site residues include His-65, Ser-114, and Glu-141.

Belongs to the HK97 prohead protease protein family. Cleaves itself autocatalytically to yield the mature form of the protease.

The protein resides in the virion. Functionally, protease involved in virion assembly and maturation. The polypeptide is Prohead protease (4) (Escherichia coli (Bacteriophage HK97)).